The following is a 226-amino-acid chain: Neuromodulin (226 aa).

A disordered region spans residues Met-1 to Ala-226. S-palmitoyl cysteine attachment occurs at residues Cys-3 and Cys-4. Over residues Lys-9–His-32 the composition is skewed to basic and acidic residues. The 30-residue stretch at Ala-31–Pro-60 folds into the IQ domain. Phosphoserine; by PHK and PKC is present on Ser-41. Residues Leu-51–Asp-84 are compositionally biased toward basic and acidic residues. Over residues Gly-85–Pro-97 the composition is skewed to low complexity. Phosphoserine is present on residues Ser-86 and Ser-96. Residues Lys-98–Gly-127 show a composition bias toward basic and acidic residues. A compositionally biased stretch (low complexity) spans Ser-128–Thr-139. Phosphoserine occurs at positions 142, 144, and 145. A compositionally biased stretch (basic and acidic residues) spans Lys-146–Gln-158. Over residues Ala-159–Ser-192 the composition is skewed to low complexity. Thr-172 is modified (phosphothreonine). Phosphoserine is present on residues Ser-191 and Ser-192. Basic and acidic residues predominate over residues Val-201 to Glu-214. A compositionally biased stretch (acidic residues) spans Gly-215–Ala-226.

Belongs to the neuromodulin family. In terms of assembly, identified in a complex containing FGFR4, NCAM1, CDH2, PLCG1, FRS2, SRC, SHC1, GAP43 and CTTN. Interacts (via IQ domain) with calmodulin. Binds calmodulin with a greater affinity in the absence of Ca(2+) than in its presence. Post-translationally, phosphorylated. Phosphorylation of this protein by a protein kinase C is specifically correlated with certain forms of synaptic plasticity. In terms of processing, palmitoylated by ZDHHC3. Palmitoylation is regulated by ARF6 and is essential for plasma membrane association and axonal and dendritic filopodia induction. Deacylated by LYPLA2. As to expression, expressed in hippocampal neurons, with highest levels of expression in the CA4 and CA3 neurons and lower levels in CA1 neurons. Expressed in the dorsal root ganglion.

It is found in the cell membrane. The protein resides in the cell projection. It localises to the growth cone. The protein localises to the growth cone membrane. Its subcellular location is the synapse. It is found in the filopodium membrane. The protein resides in the perikaryon. It localises to the dendrite. The protein localises to the axon. Its subcellular location is the cytoplasm. Functionally, this protein is associated with nerve growth. It is a major component of the motile 'growth cones' that form the tips of elongating axons. Plays a role in axonal and dendritic filopodia induction. This chain is Neuromodulin (Gap43), found in Rattus norvegicus (Rat).